We begin with the raw amino-acid sequence, 333 residues long: MSSSSGVPESWIASFCSLLGHEYFAEVSEEFIEDDFNLTGLQTQVAMYKEALEMILDVEPEDDDDEEEEDEEDEEDMSGGDGINKPHGERRHHSRIASDLSVIESSAEMLYGLIHQRFICSRAGIQQMSEKYELGHFGICPRTNCNQTRTLPVGLSDTPGEDTVKLFCPSCLDVYVPPNSRFQTVDGAFFGRTFGALFLMTFPEYDLTKTGAESVSNLTRSGSDDTTVINGMYARNIAPGLGRGKIYQPKIYGFKVSEIARSGPRMQWLRSKPDDLSVLDEARRYAEQQGSDDEDESMGVSSRTASRRRGPPRRQKQNGSPMAIEQNGAESEL.

Residues 58 to 78 show a composition bias toward acidic residues; it reads VEPEDDDDEEEEDEEDEEDMS. Disordered regions lie at residues 58–92 and 282–333; these read VEPEDDDDEEEEDEEDEEDMSGGDGINKPHGERRH and ARRY…ESEL. The span at 305–316 shows a compositional bias: basic residues; sequence ASRRRGPPRRQK.

It belongs to the casein kinase 2 subunit beta family. As to quaternary structure, tetramer composed of two alpha chains, one beta chain and one beta' chain. Post-translationally, phosphorylated by alpha subunit.

In terms of biological role, regulatory subunit of casein kinase II/CK2. As part of the kinase complex regulates the basal catalytic activity of the alpha subunit a constitutively active serine/threonine-protein kinase that phosphorylates a large number of substrates containing acidic residues C-terminal to the phosphorylated serine or threonine. The chain is Casein kinase II subunit beta-1 (ckb-1) from Neurospora crassa (strain ATCC 24698 / 74-OR23-1A / CBS 708.71 / DSM 1257 / FGSC 987).